A 397-amino-acid polypeptide reads, in one-letter code: DNA excision repair protein ERCC-8 (397 aa).

WD repeat units follow at residues 41-81, 97-137, 184-224, 243-282, and 332-371; these read IHGS…RQPH, VHKY…AADV, GHRQ…GCLL, AHNGKVNGLCFTSDGLHLLTIGTDNRMRLWNSSSGDNTLV, and GHYKSVDCCVFQPNFQELYSGSRDCNILAWVPPSYEPVPD. Phosphoserine is present on residues Ser391, Ser392, and Ser393.

Part of the CSA complex (also named DCX(ERCC8) complex), a DCX E3 ubiquitin-protein ligase complex containing ERCC8, RBX1, DDB1 and CUL4A; the CSA complex interacts with RNA polymerase II; upon UV irradiation it interacts with the COP9 signalosome and preferentially with the hyperphosphorylated form of RNA polymerase II. Interacts with ERCC6/CSB (via CIM motif); promoting recruitment to lesion-stalled RNA polymerase II (Pol II). Interacts with KIAA1530/UVSSA. Interacts with a subunit of RNA polymerase II TFIIH.

Its subcellular location is the nucleus. The protein localises to the chromosome. The protein resides in the nucleus matrix. It functions in the pathway protein modification; protein ubiquitination. Substrate-recognition component of the CSA complex, a DCX (DDB1-CUL4-X-box) E3 ubiquitin-protein ligase complex, involved in transcription-coupled nucleotide excision repair (TC-NER), a process during which RNA polymerase II-blocking lesions are rapidly removed from the transcribed strand of active genes. Following recruitment to lesion-stalled RNA polymerase II (Pol II), the CSA complex mediates ubiquitination of Pol II subunit POLR2A/RPB1 at 'Lys-1268', a critical TC-NER checkpoint, governing RNA Pol II stability and initiating DNA damage excision by TFIIH recruitment. The CSA complex also promotes the ubiquitination and subsequent proteasomal degradation of ERCC6/CSB in a UV-dependent manner; ERCC6 degradation is essential for the recovery of RNA synthesis after transcription-coupled repair. Also plays a role in DNA double-strand breaks (DSSBs) repair by non-homologous end joining (NHEJ). The protein is DNA excision repair protein ERCC-8 of Mus musculus (Mouse).